The following is a 407-amino-acid chain: MAAPGARRPLLLLLLAGLAHSAPALFEVKDNNGTACIMASFSASFLTTYDAGHVSKVSNMTLPASAEVLKNSSSCGEKNASEPTLAITFGEGYLLKLTFTKNTTRYSVQHMYFTYNLSDTQFFPNASSKGPDTVDSTTDIKADINKTYRCVSDIRVYMKNVTIVLWDATIQAYLPSSNFSKEETRCPQDQPSPTTGPPSPSPPLVPTNPSVSKYNVTGDNGTCLLASMALQLNITYMKKDNTTVTRAFNINPSDKYSGTCGAQLVTLKVGNKSRVLELQFGMNATSSLFFLQGVQLNMTLPDAIEPTFSTSNYSLKALQASVGNSYKCNSEEHIFVSKALALNVFSVQVQAFRVESDRFGSVEECVQDGNNMLIPIAVGGALAGLVLIVLIAYLIGRKRSHAGYQTI.

The signal sequence occupies residues 1–21 (MAAPGARRPLLLLLLAGLAHS). The segment at 22-189 (APALFEVKDN…SKEETRCPQD (168 aa)) is first lumenal domain. The Lumenal portion of the chain corresponds to 22-371 (APALFEVKDN…VEECVQDGNN (350 aa)). 10 N-linked (GlcNAc...) asparagine glycosylation sites follow: asparagine 32, asparagine 59, asparagine 71, asparagine 79, asparagine 102, asparagine 116, asparagine 125, asparagine 145, asparagine 160, and asparagine 178. The cysteines at positions 36 and 75 are disulfide-linked. Cysteine 150 and cysteine 186 form a disulfide bridge. The interval 180-211 (SKEETRCPQDQPSPTTGPPSPSPPLVPTNPSV) is disordered. The interval 190–219 (QPSPTTGPPSPSPPLVPTNPSVSKYNVTGD) is hinge. The span at 194 to 206 (TTGPPSPSPPLVP) shows a compositional bias: pro residues. 8 N-linked (GlcNAc...) asparagine glycosylation sites follow: asparagine 215, asparagine 220, asparagine 233, asparagine 241, asparagine 271, asparagine 283, asparagine 297, and asparagine 312. Positions 220–371 (NGTCLLASMA…VEECVQDGNN (152 aa)) are second lumenal domain. Cysteine 223 and cysteine 260 are joined by a disulfide. Cysteine 328 and cysteine 365 are disulfide-bonded. Residues 372-395 (MLIPIAVGGALAGLVLIVLIAYLI) traverse the membrane as a helical segment. Topologically, residues 396–407 (GRKRSHAGYQTI) are cytoplasmic.

Belongs to the LAMP family. Interacts with ABCB9; this interaction strongly stabilizes ABCB9 and protects ABCB9 against lysosomal degradation. Interacts with FURIN. Interacts with TMEM175; inhibiting the proton channel activity of TMEM175. Post-translationally, O- and N-glycosylated; some of the N-glycans attached to LAMP-1 are polylactosaminoglycans.

It is found in the lysosome membrane. The protein resides in the endosome membrane. The protein localises to the late endosome membrane. It localises to the cell membrane. Its subcellular location is the cytolytic granule membrane. Its function is as follows. Lysosomal membrane glycoprotein which plays an important role in lysosome biogenesis, lysosomal pH regulation, autophagy and cholesterol homeostasis. Acts as an important regulator of lysosomal lumen pH regulation by acting as a direct inhibitor of the proton channel TMEM175, facilitating lysosomal acidification for optimal hydrolase activity. Also plays an important role in NK-cells cytotoxicity. Mechanistically, participates in cytotoxic granule movement to the cell surface and perforin trafficking to the lytic granule. In addition, protects NK-cells from degranulation-associated damage induced by their own cytotoxic granule content. Presents carbohydrate ligands to selectins. The sequence is that of Lysosome-associated membrane glycoprotein 1 (Lamp1) from Rattus norvegicus (Rat).